A 347-amino-acid polypeptide reads, in one-letter code: NADH-ubiquinone oxidoreductase chain 2 (347 aa).

The next 10 helical transmembrane spans lie at 13-33, 55-75, 96-116, 123-143, 150-170, 178-198, 201-221, 247-267, 277-297, and 325-345; these read IFAGTLITALSSHWFFAWVGL, AAIKYFLTQATASMILLMAIL, LMIVVAMAMKLGMAPFHFWVP, PLMSGLLLLTWQKLAPMSIMY, NVSLLLTLSILSILAGSWGGL, ILAYSSITHVGWMMAVLPYNP, TILNLTIYIILTTTTFLLLNL, TLLSLGGLPPLTGFLPKWLII, ITPTIMAIITLLNLYFYLRLI, and FLPTLITLTTLLLPISPFMLM.

This sequence belongs to the complex I subunit 2 family. Core subunit of respiratory chain NADH dehydrogenase (Complex I) which is composed of 45 different subunits. Interacts with TMEM242.

It is found in the mitochondrion inner membrane. The enzyme catalyses a ubiquinone + NADH + 5 H(+)(in) = a ubiquinol + NAD(+) + 4 H(+)(out). Its function is as follows. Core subunit of the mitochondrial membrane respiratory chain NADH dehydrogenase (Complex I) which catalyzes electron transfer from NADH through the respiratory chain, using ubiquinone as an electron acceptor. Essential for the catalytic activity and assembly of complex I. The chain is NADH-ubiquinone oxidoreductase chain 2 from Gorilla gorilla gorilla (Western lowland gorilla).